Consider the following 146-residue polypeptide: Heat-stable 19 kDa antigen (146 aa).

The N-terminal stretch at 1–20 (MKFSLLSAIAAAVFVPFTSA) is a signal peptide.

This sequence belongs to the cerato-platanin family. Post-translationally, glycosylated.

It is found in the secreted. In Coccidioides immitis (strain RS) (Valley fever fungus), this protein is Heat-stable 19 kDa antigen (CSA).